The sequence spans 627 residues: Serine/threonine-protein phosphatase 2A 56 kDa regulatory subunit delta 2 isoform (627 aa).

The segment at M1–Y37 is disordered.

This sequence belongs to the phosphatase 2A regulatory subunit B family. In terms of assembly, PP2A consists of a common heterodimeric core enzyme, composed of a 36 kDa catalytic subunit (subunit C) and a 65 kDa constant regulatory subunit (PR65 or subunit A), that associates with a variety of regulatory subunits. Proteins that associate with the core dimer include three families of regulatory subunits B (the R2/B/PR55/B55, R3/B''/PR72/PR130/PR59 and R5/B'/B56 families), the 48 kDa variable regulatory subunit, viral proteins, and cell signaling molecules.

The protein localises to the cytoplasm. The protein resides in the cell tip. The B regulatory subunit might modulate substrate selectivity and catalytic activity, and might also direct the localization of the catalytic enzyme to a particular subcellular compartment. Has a role in cell shape control and septum formation. This Schizosaccharomyces pombe (strain 972 / ATCC 24843) (Fission yeast) protein is Serine/threonine-protein phosphatase 2A 56 kDa regulatory subunit delta 2 isoform (par2).